The chain runs to 471 residues: Ribulose bisphosphate carboxylase large chain (471 aa).

At lysine 5 the chain carries N6,N6,N6-trimethyllysine. Substrate is bound by residues asparagine 114 and threonine 164. Lysine 166 (proton acceptor) is an active-site residue. Position 168 (lysine 168) interacts with substrate. The Mg(2+) site is built by lysine 192, aspartate 194, and glutamate 195. Lysine 192 is subject to N6-carboxylysine. Histidine 285 acts as the Proton acceptor in catalysis. Arginine 286, histidine 318, and serine 370 together coordinate substrate.

The protein belongs to the RuBisCO large chain family. Type I subfamily. Heterohexadecamer of 8 large chains and 8 small chains; disulfide-linked. The disulfide link is formed within the large subunit homodimers. The cofactor is Mg(2+). Post-translationally, the disulfide bond which can form in the large chain dimeric partners within the hexadecamer appears to be associated with oxidative stress and protein turnover.

The protein resides in the plastid. Its subcellular location is the chloroplast. The catalysed reaction is 2 (2R)-3-phosphoglycerate + 2 H(+) = D-ribulose 1,5-bisphosphate + CO2 + H2O. It catalyses the reaction D-ribulose 1,5-bisphosphate + O2 = 2-phosphoglycolate + (2R)-3-phosphoglycerate + 2 H(+). In terms of biological role, ruBisCO catalyzes two reactions: the carboxylation of D-ribulose 1,5-bisphosphate, the primary event in carbon dioxide fixation, as well as the oxidative fragmentation of the pentose substrate in the photorespiration process. Both reactions occur simultaneously and in competition at the same active site. This Schlumbergera truncata (Thanksgiving cactus) protein is Ribulose bisphosphate carboxylase large chain.